Reading from the N-terminus, the 476-residue chain is MKVLHVCSEFYPLLKTGGLADVVGALPAAQKAIGDDARILIPAYPAIWRGIPDTVVVAEFDNFAGHVTLRYGIYNGVGVYLIDAPHLYAREGNPYHDQWYNDYADNYKRFGLLGWVASELALGLDFWWQAEVVHAHDWHAGLASAYLAAKGHPAKSVFTIHNLAYQGKFAARHLIELGLPVDMFNVNGLELYGEISYLKAGLFYSDMVTTVSPTYAKEITTTEFGYGLQGLLSTLDQQNRLAGVLNGVDDSIWHPNNDPYIHHHYKLKSMSGKAKNKALLQERFNLPQNPNVPVFVMITRLTEQKGVDLLLQCADEIVNQGGQLMILGSGAPHLQDWVNWLASQHPDNVGVWIGYDEPLSHLMVAGGDVILVPSRFEPCGLTQLYGLKYGTLPLVRKTGGLADTVVDSSAENIKARRATGFVFNNAEPEALRHCIQRVFSLWSKQRTWFTVRTVAMEQDFGWRVAAHRYHELYNKI.

K15 contacts ADP-alpha-D-glucose.

It belongs to the glycosyltransferase 1 family. Bacterial/plant glycogen synthase subfamily.

It carries out the reaction [(1-&gt;4)-alpha-D-glucosyl](n) + ADP-alpha-D-glucose = [(1-&gt;4)-alpha-D-glucosyl](n+1) + ADP + H(+). The protein operates within glycan biosynthesis; glycogen biosynthesis. Functionally, synthesizes alpha-1,4-glucan chains using ADP-glucose. This is Glycogen synthase from Actinobacillus succinogenes (strain ATCC 55618 / DSM 22257 / CCUG 43843 / 130Z).